The primary structure comprises 24 residues: Neurotoxin 5 (24 aa).

The region spanning 2–24 is the LCN-type CS-alpha/beta domain; sequence RDAYIAQNYNCVYTCFKNDYCND.

The protein belongs to the long (4 C-C) scorpion toxin superfamily. Sodium channel inhibitor family. Alpha subfamily. As to expression, expressed by the venom gland.

It is found in the secreted. Functionally, binds to sodium channels (Nav) and inhibits the inactivation of the activated channels, thereby blocking neuronal transmission. The sequence is that of Neurotoxin 5 from Buthus occitanus tunetanus (Common European scorpion).